A 473-amino-acid polypeptide reads, in one-letter code: MIQRRRPVPFELGPVHFIGIGGIGMSGIAEIMIRIGYTVQGSDAKASANTERLEKLGARIFIGHDAAHVEGASAIVYSTAVKADNPEMVAGRDKRLPLVRRAEMLAELMRLQFSVAVGGTHGKTTTTSMVAALLDAGGLDPTVVNGGIINAYGTNAKVGEGDWIVVEADESDGSFLKLKSTVAIVTNIDAEHLDHWGDFDAVKKGFQDFIQNIPFYGFAAVCTDHPEVQALTSRIENRRLVTYGTNPQAEVRVSNIEMGPEGATFDIIVSPRAGEAVRYDGLKMPMAGHHNVLNATAAVAVARELGVDAEAIAKGLAGFGGVKRRFTTTGVANGIRVVDDYGHHPVEIAAVLKAARAVTPNGKVIAVVQPHRFTRLRDLMTEFSSCFNDADTVIVADVYTAGEQPIPGVDRDALVAGLKKFGHRRALPLENPTALPRLIAAEATSGDLVVLLGAGDITTWSYALPGQLEALTK.

G119–T125 is a binding site for ATP.

Belongs to the MurCDEF family.

The protein resides in the cytoplasm. The catalysed reaction is UDP-N-acetyl-alpha-D-muramate + L-alanine + ATP = UDP-N-acetyl-alpha-D-muramoyl-L-alanine + ADP + phosphate + H(+). Its pathway is cell wall biogenesis; peptidoglycan biosynthesis. Functionally, cell wall formation. In Caulobacter vibrioides (strain NA1000 / CB15N) (Caulobacter crescentus), this protein is UDP-N-acetylmuramate--L-alanine ligase.